We begin with the raw amino-acid sequence, 329 residues long: Thiamine thiazole synthase (329 aa).

Residues Cys86, 107–108 (EA), Gly115, and Val180 contribute to the substrate site. Cys218 carries the post-translational modification 2,3-didehydroalanine (Cys). Substrate-binding positions include Asp220, His235, Met287, and 297-299 (RMG).

The protein belongs to the THI4 family. Homooctamer. It depends on Fe cation as a cofactor. Post-translationally, during the catalytic reaction, a sulfide is transferred from Cys-218 to a reaction intermediate, generating a dehydroalanine residue.

It localises to the cytoplasm. It is found in the nucleus. It carries out the reaction [ADP-thiazole synthase]-L-cysteine + glycine + NAD(+) = [ADP-thiazole synthase]-dehydroalanine + ADP-5-ethyl-4-methylthiazole-2-carboxylate + nicotinamide + 3 H2O + 2 H(+). Involved in biosynthesis of the thiamine precursor thiazole. Catalyzes the conversion of NAD and glycine to adenosine diphosphate 5-(2-hydroxyethyl)-4-methylthiazole-2-carboxylic acid (ADT), an adenylated thiazole intermediate. The reaction includes an iron-dependent sulfide transfer from a conserved cysteine residue of the protein to a thiazole intermediate. The enzyme can only undergo a single turnover, which suggests it is a suicide enzyme. May have additional roles in adaptation to various stress conditions and in DNA damage tolerance. The chain is Thiamine thiazole synthase from Phaeosphaeria nodorum (strain SN15 / ATCC MYA-4574 / FGSC 10173) (Glume blotch fungus).